The following is a 169-amino-acid chain: ATP synthase subunit b (169 aa).

The chain crosses the membrane as a helical span at residues 12 to 32 (HIYLGNAIWYLLCFAILMLLI).

Belongs to the ATPase B chain family. F-type ATPases have 2 components, F(1) - the catalytic core - and F(0) - the membrane proton channel. F(1) has five subunits: alpha(3), beta(3), gamma(1), delta(1), epsilon(1). F(0) has three main subunits: a(1), b(2) and c(10-14). The alpha and beta chains form an alternating ring which encloses part of the gamma chain. F(1) is attached to F(0) by a central stalk formed by the gamma and epsilon chains, while a peripheral stalk is formed by the delta and b chains.

Its subcellular location is the cell membrane. Its activity is regulated as follows. Increases 2-fold following exposure to low pH. Its function is as follows. F(1)F(0) ATP synthase produces ATP from ADP in the presence of a proton or sodium gradient. F-type ATPases consist of two structural domains, F(1) containing the extramembraneous catalytic core and F(0) containing the membrane proton channel, linked together by a central stalk and a peripheral stalk. During catalysis, ATP synthesis in the catalytic domain of F(1) is coupled via a rotary mechanism of the central stalk subunits to proton translocation. Component of the F(0) channel, it forms part of the peripheral stalk, linking F(1) to F(0). This Lactobacillus acidophilus (strain ATCC 700396 / NCK56 / N2 / NCFM) protein is ATP synthase subunit b.